Here is a 274-residue protein sequence, read N- to C-terminus: 3-methyl-2-oxobutanoate hydroxymethyltransferase (274 aa).

Residues D44 and D83 each coordinate Mg(2+). Residues 44 to 45 (DS), D83, and K113 contribute to the 3-methyl-2-oxobutanoate site. E115 provides a ligand contact to Mg(2+). E182 acts as the Proton acceptor in catalysis.

It belongs to the PanB family. As to quaternary structure, homodecamer; pentamer of dimers. Requires Mg(2+) as cofactor.

The protein resides in the cytoplasm. The catalysed reaction is 3-methyl-2-oxobutanoate + (6R)-5,10-methylene-5,6,7,8-tetrahydrofolate + H2O = 2-dehydropantoate + (6S)-5,6,7,8-tetrahydrofolate. It participates in cofactor biosynthesis; (R)-pantothenate biosynthesis; (R)-pantoate from 3-methyl-2-oxobutanoate: step 1/2. In terms of biological role, catalyzes the reversible reaction in which hydroxymethyl group from 5,10-methylenetetrahydrofolate is transferred onto alpha-ketoisovalerate to form ketopantoate. This Campylobacter jejuni subsp. jejuni serotype O:6 (strain 81116 / NCTC 11828) protein is 3-methyl-2-oxobutanoate hydroxymethyltransferase.